Reading from the N-terminus, the 55-residue chain is ATP synthase protein 8 (55 aa).

A helical transmembrane segment spans residues 8–28 (WWIVNFSLIWASVLIVISLLL). A disordered region spans residues 34–55 (NSAGQSSSSLTLNKTTTNWQWL). The span at 39–55 (SSSSLTLNKTTTNWQWL) shows a compositional bias: low complexity.

Belongs to the ATPase protein 8 family. F-type ATPases have 2 components, CF(1) - the catalytic core - and CF(0) - the membrane proton channel.

It localises to the mitochondrion membrane. Mitochondrial membrane ATP synthase (F(1)F(0) ATP synthase or Complex V) produces ATP from ADP in the presence of a proton gradient across the membrane which is generated by electron transport complexes of the respiratory chain. F-type ATPases consist of two structural domains, F(1) - containing the extramembraneous catalytic core and F(0) - containing the membrane proton channel, linked together by a central stalk and a peripheral stalk. During catalysis, ATP synthesis in the catalytic domain of F(1) is coupled via a rotary mechanism of the central stalk subunits to proton translocation. Part of the complex F(0) domain. Minor subunit located with subunit a in the membrane. The polypeptide is ATP synthase protein 8 (MT-ATP8) (Strongylocentrotus purpuratus (Purple sea urchin)).